The following is an 86-amino-acid chain: Large ribosomal subunit protein bL27 (86 aa).

The segment covering Met1–Thr10 has biased composition (gly residues). A disordered region spans residues Met1–Leu21.

This sequence belongs to the bacterial ribosomal protein bL27 family.

The polypeptide is Large ribosomal subunit protein bL27 (Ralstonia nicotianae (strain ATCC BAA-1114 / GMI1000) (Ralstonia solanacearum)).